Reading from the N-terminus, the 521-residue chain is Bifunctional purine biosynthesis protein PurH (521 aa).

In terms of domain architecture, MGS-like spans 1–147 (MAKISRALIS…KNNADVTVLV (147 aa)).

Belongs to the PurH family.

It catalyses the reaction (6R)-10-formyltetrahydrofolate + 5-amino-1-(5-phospho-beta-D-ribosyl)imidazole-4-carboxamide = 5-formamido-1-(5-phospho-D-ribosyl)imidazole-4-carboxamide + (6S)-5,6,7,8-tetrahydrofolate. The catalysed reaction is IMP + H2O = 5-formamido-1-(5-phospho-D-ribosyl)imidazole-4-carboxamide. Its pathway is purine metabolism; IMP biosynthesis via de novo pathway; 5-formamido-1-(5-phospho-D-ribosyl)imidazole-4-carboxamide from 5-amino-1-(5-phospho-D-ribosyl)imidazole-4-carboxamide (10-formyl THF route): step 1/1. The protein operates within purine metabolism; IMP biosynthesis via de novo pathway; IMP from 5-formamido-1-(5-phospho-D-ribosyl)imidazole-4-carboxamide: step 1/1. The sequence is that of Bifunctional purine biosynthesis protein PurH from Geotalea daltonii (strain DSM 22248 / JCM 15807 / FRC-32) (Geobacter daltonii).